The following is a 379-amino-acid chain: UDP-4-amino-4-deoxy-L-arabinose--oxoglutarate aminotransferase (379 aa).

Lys182 is subject to N6-(pyridoxal phosphate)lysine.

This sequence belongs to the DegT/DnrJ/EryC1 family. ArnB subfamily. As to quaternary structure, homodimer. Pyridoxal 5'-phosphate is required as a cofactor.

It catalyses the reaction UDP-4-amino-4-deoxy-beta-L-arabinose + 2-oxoglutarate = UDP-beta-L-threo-pentopyranos-4-ulose + L-glutamate. Its pathway is nucleotide-sugar biosynthesis; UDP-4-deoxy-4-formamido-beta-L-arabinose biosynthesis; UDP-4-deoxy-4-formamido-beta-L-arabinose from UDP-alpha-D-glucuronate: step 2/3. It participates in bacterial outer membrane biogenesis; lipopolysaccharide biosynthesis. Functionally, catalyzes the conversion of UDP-4-keto-arabinose (UDP-Ara4O) to UDP-4-amino-4-deoxy-L-arabinose (UDP-L-Ara4N). The modified arabinose is attached to lipid A and is required for resistance to polymyxin and cationic antimicrobial peptides. The polypeptide is UDP-4-amino-4-deoxy-L-arabinose--oxoglutarate aminotransferase (Escherichia coli O127:H6 (strain E2348/69 / EPEC)).